The primary structure comprises 551 residues: Preprotein translocase subunit SCY1, chloroplastic (551 aa).

The N-terminal 67 residues, Met-1–Arg-67, are a transit peptide targeting the chloroplast. The next 10 membrane-spanning stretches (helical) occupy residues Phe-142–Gly-162, Leu-192–Leu-212, Ala-241–Val-261, Trp-268–Glu-288, Leu-295–Phe-315, Tyr-328–Val-348, Ser-382–Ala-402, Phe-415–Phe-435, Val-482–Thr-502, and His-503–Thr-523.

Belongs to the SecY/SEC61-alpha family. In terms of assembly, part of the Sec protein translocation apparatus. Interacts with SECE1, ALB3 and probably with SECA1.

Its subcellular location is the plastid. The protein resides in the chloroplast thylakoid membrane. Its function is as follows. Involved in protein export. Probably interacts with other proteins to allow the translocation of proteins across the chloroplast thylakoid membranes. Required for normal greening during embryogenesis. Central subunit of the protein translocation channel SecYE. Consists of two halves formed by TMs 1-5 and 6-10. These two domains form a lateral gate at the front which open onto the bilayer between TMs 2 and 7, and are clamped together by SecE at the back. The channel is closed by both a pore ring composed of hydrophobic SecY resides and a short helix (helix 2A) on the extracellular side of the membrane which forms a plug. This is Preprotein translocase subunit SCY1, chloroplastic (SCY1) from Arabidopsis thaliana (Mouse-ear cress).